The chain runs to 166 residues: Lipoprotein signal peptidase (166 aa).

Transmembrane regions (helical) follow at residues 11–31 (LNLVIILVVFIFDRTTKLYIL), 42–62 (IYITPFLNLFLIWNKGIAFGL), 69–89 (VIYNSITILIGLIIIAIIFMM), and 99–119 (FFALIAGGAFGNFYDRIVYTA). Catalysis depends on residues D122 and D140. The chain crosses the membrane as a helical span at residues 133-153 (WFVFNVADIFITIGVFCLILV).

The protein belongs to the peptidase A8 family.

The protein resides in the cell inner membrane. The enzyme catalyses Release of signal peptides from bacterial membrane prolipoproteins. Hydrolyzes -Xaa-Yaa-Zaa-|-(S,diacylglyceryl)Cys-, in which Xaa is hydrophobic (preferably Leu), and Yaa (Ala or Ser) and Zaa (Gly or Ala) have small, neutral side chains.. It functions in the pathway protein modification; lipoprotein biosynthesis (signal peptide cleavage). Its function is as follows. This protein specifically catalyzes the removal of signal peptides from prolipoproteins. In Pelagibacter ubique (strain HTCC1062), this protein is Lipoprotein signal peptidase.